The chain runs to 37 residues: Cytochrome b6-f complex subunit 5 (37 aa).

A helical membrane pass occupies residues 5–25 (FLFGIVLGLIPITLTGLFVTA).

Belongs to the PetG family. The 4 large subunits of the cytochrome b6-f complex are cytochrome b6, subunit IV (17 kDa polypeptide, PetD), cytochrome f and the Rieske protein, while the 4 small subunits are PetG, PetL, PetM and PetN. The complex functions as a dimer.

The protein resides in the plastid. It localises to the chloroplast thylakoid membrane. In terms of biological role, component of the cytochrome b6-f complex, which mediates electron transfer between photosystem II (PSII) and photosystem I (PSI), cyclic electron flow around PSI, and state transitions. PetG is required for either the stability or assembly of the cytochrome b6-f complex. This is Cytochrome b6-f complex subunit 5 from Phalaenopsis aphrodite subsp. formosana (Moth orchid).